A 663-amino-acid chain; its full sequence is RING finger protein 145 (663 aa).

A run of 14 helical transmembrane segments spans residues 53–73, 77–97, 123–143, 146–166, 168–188, 205–222, 225–245, 275–295, 316–336, 340–360, 384–404, 410–430, 460–480, and 482–502; these read YLALNMHYVGYILSVVLLTLP, LVQLYLYFLTALLLYAGHQIS, FTTALIGQLVVCTLCSCVMKT, IWLFSAHMLPLLARLCLVPLE, IVIINKFAMIFTGLEVLYFLG, LVQVVEVYGLLALGMSLW, LVVPVLFMVFWLVLFALQIYS, YSLLGLVFTVSFVALGVLTLC, TEGVTLLILAVQTGLIELQVV, FLLSIILFIVVASILQSMLEI, SLCLFLLVFPAYMAYMICQFF, LLIIISSSILTSLQVLGTLFI, LLEFLVALCVVAYGVSETIFG, and WTVMGSMIIFIHSYYNVWLRA. Residues 81 to 84 carry the YLYF motif motif; the sequence is YLYF. Cys537 is an active-site residue. The RING-type; atypical zinc-finger motif lies at 537–575; the sequence is CAICYQDMKSAVITPCSHFFHAGCLKKWLYVQETCPLCH. A disordered region spans residues 607–663; it reads EGTEPPGQEHTPGTRIQEGSRDNNEYIARRPDNQEGAFDPKEYPHSAKDEAHPVESA. The span at 624 to 663 shows a compositional bias: basic and acidic residues; that stretch reads EGSRDNNEYIARRPDNQEGAFDPKEYPHSAKDEAHPVESA.

In terms of assembly, interacts (via YLYF motif) with INSIG1 and INSIG2.

The protein resides in the endoplasmic reticulum membrane. It catalyses the reaction S-ubiquitinyl-[E2 ubiquitin-conjugating enzyme]-L-cysteine + [acceptor protein]-L-lysine = [E2 ubiquitin-conjugating enzyme]-L-cysteine + N(6)-ubiquitinyl-[acceptor protein]-L-lysine.. E3 ubiquitin ligase that catalyzes the direct transfer of ubiquitin from E2 ubiquitin-conjugating enzyme to a specific substrate. In response to bacterial infection, negatively regulates the phagocyte oxidative burst by controlling the turnover of the NADPH oxidase complex subunits. Promotes monoubiquitination of CYBA and 'Lys-48'-linked polyubiquitination and degradation of CYBB NADPH oxidase catalytic subunits, both essential for the generation of antimicrobial reactive oxygen species. Involved in the maintenance of cholesterol homeostasis. In response to high sterol concentrations ubiquitinates HMGCR, a rate-limiting enzyme in cholesterol biosynthesis, and targets it for degradation. The interaction with INSIG1 is required for this function. In addition, triggers ubiquitination of SCAP, likely inhibiting its transport to the Golgi apparatus and the subsequent processing/maturation of SREBPF2, ultimately down-regulating cholesterol biosynthesis. The polypeptide is RING finger protein 145 (Homo sapiens (Human)).